We begin with the raw amino-acid sequence, 298 residues long: Putative GATA zinc finger domain-containing protein 25 (298 aa).

Residues 4 to 37 (DNKNKNDNYQESIQRIVNQRNNLLKEIENKINQQ) adopt a coiled-coil conformation. Residues 148-227 (QQQLQQSHTK…RGRPSKPKPE (80 aa)) are disordered. Residues 183–202 (EENEENEENEENEENEENEE) show a composition bias toward acidic residues. Residues 203–212 (NKEKDVEVAK) are compositionally biased toward basic and acidic residues. Residues 214–223 (NKPKRGRPSK) show a composition bias toward basic residues. The GATA-type; degenerate zinc-finger motif lies at 229–256 (CFRYGTRSCPYWRKNVIKGELVDVCNAC).

The polypeptide is Putative GATA zinc finger domain-containing protein 25 (gtaY) (Dictyostelium discoideum (Social amoeba)).